A 423-amino-acid polypeptide reads, in one-letter code: Replication factor C large subunit (423 aa).

An ATP-binding site is contributed by 63–70 (GPPGIGKT).

The protein belongs to the activator 1 small subunits family. RfcL subfamily. As to quaternary structure, heteromultimer composed of small subunits (RfcS) and large subunits (RfcL).

In terms of biological role, part of the RFC clamp loader complex which loads the PCNA sliding clamp onto DNA. The polypeptide is Replication factor C large subunit (Pyrobaculum islandicum (strain DSM 4184 / JCM 9189 / GEO3)).